Here is an 83-residue protein sequence, read N- to C-terminus: Disintegrin bitistatin (83 aa).

One can recognise a Disintegrin domain in the interval 2 to 83 (PPVCGNKILE…GKSSDCPWNH (82 aa)). Intrachain disulfides connect Cys5–Cys24, Cys5–Cys34, Cys16–Cys29, Cys16–Cys34, Cys18–Cys24, Cys18–Cys29, Cys28–Cys51, Cys42–Cys48, Cys47–Cys72, and Cys60–Cys79. The short motif at 64-66 (RGD) is the Cell attachment site element.

It belongs to the venom metalloproteinase (M12B) family. P-II subfamily. P-IIa sub-subfamily. Monomer. Exists in 3 forms in the venom. The forms A, B, and C are present at 53%, 32% and 15%. The forms A and B differ by their disulfide bond pattern in the N-terminal part. No information is known about form C. Expressed by the venom gland.

It is found in the secreted. Functionally, inhibits fibrinogen interaction with platelets. Acts by binding to alpha-IIb/beta-3 (ITGA2B/ITGB3) on the platelet surface and inhibits aggregation induced by ADP, thrombin, platelet-activating factor and collagen. The polypeptide is Disintegrin bitistatin (Bitis arietans (African puff adder)).